Here is a 156-residue protein sequence, read N- to C-terminus: Arginine repressor (156 aa).

Belongs to the ArgR family.

The protein localises to the cytoplasm. It participates in amino-acid biosynthesis; L-arginine biosynthesis [regulation]. In terms of biological role, regulates arginine biosynthesis genes. The protein is Arginine repressor of Salmonella agona (strain SL483).